A 476-amino-acid polypeptide reads, in one-letter code: 3-isopropylmalate dehydratase large subunit (476 aa).

[4Fe-4S] cluster contacts are provided by Cys353, Cys413, and Cys416.

The protein belongs to the aconitase/IPM isomerase family. LeuC type 1 subfamily. As to quaternary structure, heterodimer of LeuC and LeuD. It depends on [4Fe-4S] cluster as a cofactor.

The catalysed reaction is (2R,3S)-3-isopropylmalate = (2S)-2-isopropylmalate. It participates in amino-acid biosynthesis; L-leucine biosynthesis; L-leucine from 3-methyl-2-oxobutanoate: step 2/4. In terms of biological role, catalyzes the isomerization between 2-isopropylmalate and 3-isopropylmalate, via the formation of 2-isopropylmaleate. The chain is 3-isopropylmalate dehydratase large subunit from Photobacterium profundum (strain SS9).